The sequence spans 37 residues: Large ribosomal subunit protein bL36 (37 aa).

The protein belongs to the bacterial ribosomal protein bL36 family.

The sequence is that of Large ribosomal subunit protein bL36 from Idiomarina loihiensis (strain ATCC BAA-735 / DSM 15497 / L2-TR).